Consider the following 209-residue polypeptide: Kynurenine formamidase (209 aa).

W20 contributes to the substrate binding site. H50, H54, and D56 together coordinate Zn(2+). H60 serves as the catalytic Proton donor/acceptor. The Zn(2+) site is built by H161 and E173.

This sequence belongs to the Cyclase 1 superfamily. KynB family. Homodimer. Zn(2+) is required as a cofactor.

The enzyme catalyses N-formyl-L-kynurenine + H2O = L-kynurenine + formate + H(+). Its pathway is amino-acid degradation; L-tryptophan degradation via kynurenine pathway; L-kynurenine from L-tryptophan: step 2/2. In terms of biological role, catalyzes the hydrolysis of N-formyl-L-kynurenine to L-kynurenine, the second step in the kynurenine pathway of tryptophan degradation. In Bacillus thuringiensis subsp. konkukian (strain 97-27), this protein is Kynurenine formamidase.